The following is a 240-amino-acid chain: MATLFIADLHLCVEEPAITAGFLRFLAGEARKADALYILGDLFEAWIGDDDPNPLHHQMAAAIKAVSDSGVPCYFIHGNRDFLLGKRFARESGMTLLPEEKVLELYGRRVLIMHGDTLCTDDAGYQAFRAKVHKPWLQTLFLALPLFVRKRIAARMRANSKEANSSKSLAIMDVNQNAVVSAMEKHQVQWLIHGHTHRPAVHELIANQQPAFRVVLGAWHTEGSMVKVTADDVELIHFPF.

Mn(2+)-binding residues include Asp8, His10, Asp41, Asn79, and His114. Residue 79 to 80 (NR) participates in substrate binding. Substrate-binding residues include Asp122, Ser160, Asn164, Lys167, and His195. Mn(2+) is bound by residues His195 and His197.

It belongs to the LpxH family. Requires Mn(2+) as cofactor.

The protein resides in the cell inner membrane. The enzyme catalyses UDP-2-N,3-O-bis[(3R)-3-hydroxytetradecanoyl]-alpha-D-glucosamine + H2O = 2-N,3-O-bis[(3R)-3-hydroxytetradecanoyl]-alpha-D-glucosaminyl 1-phosphate + UMP + 2 H(+). Its pathway is glycolipid biosynthesis; lipid IV(A) biosynthesis; lipid IV(A) from (3R)-3-hydroxytetradecanoyl-[acyl-carrier-protein] and UDP-N-acetyl-alpha-D-glucosamine: step 4/6. Hydrolyzes the pyrophosphate bond of UDP-2,3-diacylglucosamine to yield 2,3-diacylglucosamine 1-phosphate (lipid X) and UMP by catalyzing the attack of water at the alpha-P atom. Involved in the biosynthesis of lipid A, a phosphorylated glycolipid that anchors the lipopolysaccharide to the outer membrane of the cell. In Escherichia coli (strain UTI89 / UPEC), this protein is UDP-2,3-diacylglucosamine hydrolase.